A 289-amino-acid polypeptide reads, in one-letter code: Urease accessory protein UreD (289 aa).

The protein belongs to the UreD family. UreD, UreF and UreG form a complex that acts as a GTP-hydrolysis-dependent molecular chaperone, activating the urease apoprotein by helping to assemble the nickel containing metallocenter of UreC. The UreE protein probably delivers the nickel.

It localises to the cytoplasm. In terms of biological role, required for maturation of urease via the functional incorporation of the urease nickel metallocenter. This is Urease accessory protein UreD from Xanthobacter autotrophicus (strain ATCC BAA-1158 / Py2).